Reading from the N-terminus, the 380-residue chain is E3 ubiquitin-protein ligase RNF13 (380 aa).

The signal sequence occupies residues 1–34; that stretch reads MLLSIGMLMLSATQVYTILTVQLFAFLNLLPVEA. Residues 35 to 182 are Lumenal-facing; that stretch reads DILAYNFENA…VPELSLPLEY (148 aa). The PA domain maps to 64 to 160; sequence LKGFLINSKP…GESSANSLKD (97 aa). An N-linked (GlcNAc...) asparagine glycan is attached at Asn88. The helical transmembrane segment at 183 to 203 threads the bilayer; the sequence is YLIPFLIIVGICLILIVIFMI. At 204 to 380 the chain is on the cytoplasmic side; that stretch reads TKFVQDRHRN…EPDYNIANTV (177 aa). Residues 240-282 form an RING-type; atypical zinc finger; sequence CAICLEEYEDGDKLRILPCSHAYHCKCVDPWLTKTKKTCPVCK. The segment at 285 to 380 is disordered; sequence VVPSQGDSDS…EPDYNIANTV (96 aa). Residues 338 to 356 are compositionally biased toward acidic residues; sequence SDYEDDDNEETDSSDADNE.

Interacts with ERN1. Post-translationally, autoubiquitinated.

The protein localises to the endoplasmic reticulum membrane. It localises to the late endosome membrane. It is found in the lysosome membrane. Its subcellular location is the nucleus inner membrane. It carries out the reaction S-ubiquitinyl-[E2 ubiquitin-conjugating enzyme]-L-cysteine + [acceptor protein]-L-lysine = [E2 ubiquitin-conjugating enzyme]-L-cysteine + N(6)-ubiquitinyl-[acceptor protein]-L-lysine.. Its pathway is protein modification; protein ubiquitination. Functionally, E3 ubiquitin-protein ligase that regulates cell proliferation. Involved in apoptosis regulation. Mediates ER stress-induced activation of JNK signaling pathway and apoptosis by promoting ERN1 activation and splicing of XBP1 mRNA. Also involved in protein trafficking and localization. The chain is E3 ubiquitin-protein ligase RNF13 (Rnf13) from Rattus norvegicus (Rat).